Reading from the N-terminus, the 107-residue chain is MMKVLVVVALLVTLISYSSSEGIDDLEADELLSLMANEQTRKECIPKHHECTSNKHGRCRGNFFKYKCQCTTVVTQDGEQTERCFCGTPPHHKAAELVVGFGKKIFG.

A signal peptide spans 1–20; it reads MMKVLVVVALLVTLISYSSS. The propeptide occupies 21 to 41; the sequence is EGIDDLEADELLSLMANEQTR. 3 cysteine pairs are disulfide-bonded: C44–C59, C51–C68, and C70–C84.

The protein belongs to the neurotoxin 19 (CSTX) family. 04 (U1-Lctx) subfamily. In terms of tissue distribution, expressed by the venom gland.

It is found in the secreted. In Lycosa singoriensis (Wolf spider), this protein is U1-lycotoxin-Ls1h.